The following is a 723-amino-acid chain: Protein Hook homolog (723 aa).

The region spanning 4 to 120 (TELCECLVQW…RLLQLILGCA (117 aa)) is the Calponin-homology (CH) domain. 2 coiled-coil regions span residues 162-423 (VLPE…MQLQ) and 457-665 (EIKE…IVSA). A disordered region spans residues 682–723 (LANGGPMQGGQSFLARQRQATSRRTTVSTTHPGHARSVNFVN). Positions 696–711 (ARQRQATSRRTTVSTT) are enriched in low complexity.

The protein belongs to the hook family. As to quaternary structure, interacts with microtubules.

The protein resides in the cytoplasm. It localises to the cytoskeleton. In terms of biological role, may function to promote vesicle trafficking and/or fusion. May act to link a number of membrane-bound organelles to the cytoskeleton. The protein is Protein Hook homolog of Branchiostoma floridae (Florida lancelet).